Reading from the N-terminus, the 147-residue chain is Secreted hemophore CSA2 (147 aa).

An N-terminal signal peptide occupies residues Met-1–Ala-20. One can recognise a CFEM domain in the interval Asn-34–Thr-145. 4 disulfides stabilise this stretch: Cys-62/Cys-102, Cys-66/Cys-97, Cys-76/Cys-83, and Cys-85/Cys-118. Residue Asp-80 participates in heme binding.

This sequence belongs to the RBT5 family. As to quaternary structure, homodimer. The possibility of a transient honotrimer assembly of the holo protein is not ruled out.

The protein localises to the secreted. In terms of biological role, secreted heme-binding protein involved in the utilization of iron from human hemoglobin during hyphal growth. May also play a role in non-hemoglobin iron utilization. Heme transfer occurs between PGA7, RBT5 and CSA2 supporting a model in which the 3 CFEM proteins cooperate in a heme-acquisition system and form a cross-cell wall heme-transfer cascade. The ability to acquire iron from host tissues is a major virulence factor of pathogenic microorganisms. In Candida albicans (strain SC5314 / ATCC MYA-2876) (Yeast), this protein is Secreted hemophore CSA2 (CSA2).